A 576-amino-acid polypeptide reads, in one-letter code: Alpha-bisabolol synthase (576 aa).

Arg286, Asp323, Asp327, Arg466, and Asn469 together coordinate (2E,6E)-farnesyl diphosphate. Residues Asp323 and Asp327 each coordinate Mg(2+). Residues 323 to 327 (DDVYD) carry the DDXXD motif motif. 3 residues coordinate Mg(2+): Asn469, Thr473, and Glu477.

It belongs to the terpene synthase family. Tpsb subfamily. Requires Mg(2+) as cofactor. Mn(2+) serves as cofactor.

Functionally, produces a mixture of beta-bisabolene and alpha-bisabolol, along with traces of alpha-bisabolene and farnesene isomers from (2E,6E)-farnesyl diphosphate in fragrance biosynthesis. In Santalum spicatum (Australian sandalwood), this protein is Alpha-bisabolol synthase.